The sequence spans 130 residues: Small ribosomal subunit protein uS8 (130 aa).

It belongs to the universal ribosomal protein uS8 family. Part of the 30S ribosomal subunit. Contacts proteins S5 and S12.

Its function is as follows. One of the primary rRNA binding proteins, it binds directly to 16S rRNA central domain where it helps coordinate assembly of the platform of the 30S subunit. The chain is Small ribosomal subunit protein uS8 from Buchnera aphidicola subsp. Schizaphis graminum (strain Sg).